The following is a 145-amino-acid chain: Large ribosomal subunit protein uL11 (145 aa).

Belongs to the universal ribosomal protein uL11 family. In terms of assembly, part of the ribosomal stalk of the 50S ribosomal subunit. Interacts with L10 and the large rRNA to form the base of the stalk. L10 forms an elongated spine to which L12 dimers bind in a sequential fashion forming a multimeric L10(L12)X complex. One or more lysine residues are methylated.

Forms part of the ribosomal stalk which helps the ribosome interact with GTP-bound translation factors. In Flavobacterium johnsoniae (strain ATCC 17061 / DSM 2064 / JCM 8514 / BCRC 14874 / CCUG 350202 / NBRC 14942 / NCIMB 11054 / UW101) (Cytophaga johnsonae), this protein is Large ribosomal subunit protein uL11.